The following is a 441-amino-acid chain: Protein eva-1 homolog C (441 aa).

Residues 1 to 23 (MLLPGPARQPPTPQPVQHPGLRR) are disordered. An N-terminal signal peptide occupies residues 1 to 48 (MLLPGPARQPPTPQPVQHPGLRRQVEPPGQLLRLFYCTVLVCSKEISA). The segment covering 7–16 (ARQPPTPQPV) has biased composition (pro residues). The Extracellular segment spans residues 49–322 (LTDFSGYLTK…AYIRAHPERA (274 aa)). Asn-62 is a glycosylation site (N-linked (GlcNAc...) asparagine). Residues 67–159 (ACDGDYLNLQ…KYLLVSFKCQ (93 aa)) form the SUEL-type lectin 1 domain. N-linked (GlcNAc...) asparagine glycosylation occurs at Asn-165. In terms of domain architecture, SUEL-type lectin 2 spans 168–260 (VCEDQELKLH…KYLTVTYACV (93 aa)). A helical membrane pass occupies residues 323–343 (ALLFVSSVCIGLALTLCALVI). The Cytoplasmic segment spans residues 344–441 (RESCAKDFRD…SLPRNMGQFY (98 aa)). The disordered stretch occupies residues 362-391 (VPGSDKVEEDSEDEEEEEDSSESDFPGELS). A compositionally biased stretch (acidic residues) spans 368-383 (VEEDSEDEEEEEDSSE).

The protein belongs to the EVA1 family.

It is found in the cell membrane. Its function is as follows. Binds heparin. This is Protein eva-1 homolog C (EVA1C) from Pan troglodytes (Chimpanzee).